A 144-amino-acid chain; its full sequence is Flagellar assembly factor FliW (144 aa).

It belongs to the FliW family. Monomer. One copy interacts with the each alpha-helical wing of the CsrA homodimer, yielding a FliW-CsrA(2)-FliW complex. Comparison with a CsrA-mRNA structure (2JPP) suggests CsrA cannot bind both mRNA and FliW at the same time. Interacts with flagellin.

The protein localises to the cytoplasm. Its function is as follows. Acts as an anti-CsrA protein, binds CsrA and prevents it from repressing translation of its target genes, one of which is flagellin. Binds to flagellin and participates in the assembly of the flagellum. Allosterically inhibits CsrA binding to mRNA in a non-competitive fashion by preventing CsrA binding to the 5'-UTR. The protein is Flagellar assembly factor FliW of Geobacillus thermodenitrificans (strain NG80-2).